A 261-amino-acid chain; its full sequence is Thioesterase frbD (261 aa).

This sequence belongs to the AMT4 thioesterase family.

The protein operates within antifungal biosynthesis. Its function is as follows. Thioesterase; part of the gene cluster that mediates the biosynthesis of the antifungal antibiotic FR901469, an inhibitor of beta-1,3-glucansynthase, exerting antifungal activity against the pathogenes Candida albicans and Aspergillus fumigatus. FR901469 is a cyclic depsipeptide containing 12 amino acid residues and a fatty acid chain. The NRPS frbI contains 12 modules responsible for the formation of the depsipeptide backbone which is denoted as Acyl-Thr-Ala-Tyr-Val-4OHPro-Thr-Thr-3OHPro-threo3OHGln-Gly-Thr-Orn-OH (C71H116N14O23). The PKS frbB is probably involved in the production of the hydrocarbon chain, and the acyl-CoA ligase frbC might be involved in the transport of the chain to the peptide ptoduct of frbI. Because FR901469 contains 3 hydroxylated amino acid residues, the 3 oxygenases frbA, frbH, and frbJ might be participating in amino acid hydroxylation. As no thioesterase domains were detected in frbI or frbB, the thioesterases frbD and frbE may instead release and cyclize the products of the NRPS and PKS, respectively. The protein is Thioesterase frbD of Dothideomycetidae sp. (strain 11243) (Fungal sp. (strain No.11243)).